Reading from the N-terminus, the 49-residue chain is Large ribosomal subunit protein bL33 (49 aa).

The protein belongs to the bacterial ribosomal protein bL33 family.

This Moorella thermoacetica (strain ATCC 39073 / JCM 9320) protein is Large ribosomal subunit protein bL33.